A 252-amino-acid polypeptide reads, in one-letter code: Triosephosphate isomerase (252 aa).

10-12 (NWK) lines the substrate pocket. Histidine 96 serves as the catalytic Electrophile. The Proton acceptor role is filled by glutamate 168. Residues glycine 174, serine 214, and 235 to 236 (GG) contribute to the substrate site.

Belongs to the triosephosphate isomerase family. Homodimer.

Its subcellular location is the cytoplasm. It carries out the reaction D-glyceraldehyde 3-phosphate = dihydroxyacetone phosphate. It participates in carbohydrate biosynthesis; gluconeogenesis. It functions in the pathway carbohydrate degradation; glycolysis; D-glyceraldehyde 3-phosphate from glycerone phosphate: step 1/1. Functionally, involved in the gluconeogenesis. Catalyzes stereospecifically the conversion of dihydroxyacetone phosphate (DHAP) to D-glyceraldehyde-3-phosphate (G3P). The chain is Triosephosphate isomerase from Streptococcus pyogenes serotype M1.